The sequence spans 376 residues: Alanine racemase (376 aa).

The Proton acceptor; specific for D-alanine role is filled by lysine 40. Lysine 40 bears the N6-(pyridoxal phosphate)lysine mark. A substrate-binding site is contributed by arginine 138. Residue tyrosine 270 is the Proton acceptor; specific for L-alanine of the active site. Substrate is bound at residue methionine 317.

Belongs to the alanine racemase family. Pyridoxal 5'-phosphate serves as cofactor.

It carries out the reaction L-alanine = D-alanine. The protein operates within amino-acid biosynthesis; D-alanine biosynthesis; D-alanine from L-alanine: step 1/1. Its function is as follows. Catalyzes the interconversion of L-alanine and D-alanine. May also act on other amino acids. This Lactobacillus delbrueckii subsp. bulgaricus (strain ATCC 11842 / DSM 20081 / BCRC 10696 / JCM 1002 / NBRC 13953 / NCIMB 11778 / NCTC 12712 / WDCM 00102 / Lb 14) protein is Alanine racemase (alr).